The primary structure comprises 211 residues: Large ribosomal subunit protein eL13 (211 aa).

K16 is modified (N6-acetyllysine). A phosphoserine mark is found at S52, S77, and S106. Glycyl lysine isopeptide (Lys-Gly) (interchain with G-Cter in SUMO2) cross-links involve residues K123 and K145. Residue K174 forms a Glycyl lysine isopeptide (Lys-Gly) (interchain with G-Cter in SUMO1); alternate linkage. Glycyl lysine isopeptide (Lys-Gly) (interchain with G-Cter in SUMO2); alternate cross-links involve residues K174 and K177. The residue at position 177 (K177) is an N6-acetyllysine; alternate.

This sequence belongs to the eukaryotic ribosomal protein eL13 family. As to quaternary structure, component of the large ribosomal subunit.

Its subcellular location is the cytoplasm. Functionally, component of the large ribosomal subunit. The ribosome is a large ribonucleoprotein complex responsible for the synthesis of proteins in the cell. This is Large ribosomal subunit protein eL13 (Rpl13) from Mus musculus (Mouse).